A 21-amino-acid polypeptide reads, in one-letter code: FVLPFDVLDSGRDLDRGWPYA.

It belongs to the protease inhibitor I3 (leguminous Kunitz-type inhibitor) family. As to expression, tubers.

Its subcellular location is the vacuole. Its function is as follows. Inhibits trypsin and chymotrypsin (serine proteases). Does not inhibit elastase, subtilisin, cathepsin L nor papain (serine and cysteine proteases). Protects the plant by inhibiting proteases of invading organisms, decreasing both hyphal growth and zoospores germination of Phytophthora infestans. The polypeptide is Serine protease inhibitor 3 (Solanum tuberosum (Potato)).